Here is a 535-residue protein sequence, read N- to C-terminus: MRLAFWLYEGTALHGISRVTNSMKGVHTVYHAPQGDDYITATYTMLERTPQFPGLSISVVRGRDLAQGVSRLPSTLQQVEHHYHPELIVIAPSCSTALLQEDLHQLAAHSGLPQEKILVYALNPFRVSENEAADGLLTELVKRFASPQEKTAQPSVNLLGFTSLGFHLRANLTSIRRMLQTLGIAVNVVAPWGASIDDLRKLPAAWLNIAPYREIGSTAAEYLADAFAMPALYEAPIGVEPTLAWLRSLIEKLNAAGAERGVAPIVMPQLNAFSLDGLSAPSGVPWFARTADMESFSNKRAFVFGDATHTVALVKFLRDELGMQIIGAGTYLERHADWVRKELEGYLPGALIVTDKFQDVAQIIDDQMPDLVCGTQMERHSCRKLDVPCMVVCPPTHIENHLLGYYPFFGFDGADVIADRVYLSCKLGLEKHLIDFFGDAGLEYEEPEVSAPSEEPVALSVAPNDHPSPEAAAEAVVIAEEGEMKWSDEAETMLKKVPFFVRKKVRKNTETFARASGASMISVDVFRQAKESLGG.

Residue Asp36 coordinates [4Fe-4S] cluster. Asp292 acts as the Proton donor in catalysis. 428 to 429 (GL) contributes to the substrate binding site.

The protein belongs to the ChlB/BchB/BchZ family. In terms of assembly, protochlorophyllide reductase is composed of three subunits; BchL, BchN and BchB. Forms a heterotetramer of two BchB and two BchN subunits. The cofactor is [4Fe-4S] cluster.

It carries out the reaction chlorophyllide a + oxidized 2[4Fe-4S]-[ferredoxin] + 2 ADP + 2 phosphate = protochlorophyllide a + reduced 2[4Fe-4S]-[ferredoxin] + 2 ATP + 2 H2O. Its pathway is porphyrin-containing compound metabolism; bacteriochlorophyll biosynthesis (light-independent). Component of the dark-operative protochlorophyllide reductase (DPOR) that uses Mg-ATP and reduced ferredoxin to reduce ring D of protochlorophyllide (Pchlide) to form chlorophyllide a (Chlide). This reaction is light-independent. The NB-protein (BchN-BchB) is the catalytic component of the complex. This Pelodictyon phaeoclathratiforme (strain DSM 5477 / BU-1) protein is Light-independent protochlorophyllide reductase subunit B.